A 375-amino-acid chain; its full sequence is Probable disease resistance protein At1g52660 (375 aa).

Positions 158-372 constitute an NB-ARC domain; it reads ENTGIIGLYG…LSNSPPNFSG (215 aa). 167–174 contributes to the ATP binding site; sequence GVEGVGKT.

Its function is as follows. Possible disease resistance protein. The sequence is that of Probable disease resistance protein At1g52660 from Arabidopsis thaliana (Mouse-ear cress).